The sequence spans 346 residues: MALLKVKFDQKKRVKLAQGLWLMNWFSVLAGIIIFGLGLFLKIELRKRSDVMNNSESHFVPNSLIGVGVLSCVFNSLAGKICYDALDPAKYAKWKPWLKPYLAVCVLFNVVLFLVALCCFLLRGSLESTLAHGLKNGMKFYRDTDTPGRCFMKKTIDMLQIEFKCCGNNGFRDWFEIQWISNRYLDFSSKEVKDRIKSNVDGRYLVDGVPFSCCNPNSPRPCIQYQLTNNSAHYSYDHQTEELNLWLRGCRAALLSYYSNLMNTTGAVTLLVWLFEVTITVGLRYLHTALEGMANPEDPECESEGWLLEKSVPETWKAFLESVKKLGKGNQVEAEGEDAGQAPAAG.

Topologically, residues 1–18 (MALLKVKFDQKKRVKLAQ) are cytoplasmic. Residues 19 to 41 (GLWLMNWFSVLAGIIIFGLGLFL) traverse the membrane as a helical segment. Topologically, residues 42–62 (KIELRKRSDVMNNSESHFVPN) are lumenal. N-linked (GlcNAc...) asparagine glycosylation is present at asparagine 53. Residues 63 to 79 (SLIGVGVLSCVFNSLAG) form a helical membrane-spanning segment. The Cytoplasmic portion of the chain corresponds to 80 to 101 (KICYDALDPAKYAKWKPWLKPY). A helical membrane pass occupies residues 102 to 122 (LAVCVLFNVVLFLVALCCFLL). The Lumenal portion of the chain corresponds to 123-264 (RGSLESTLAH…LSYYSNLMNT (142 aa)). N-linked (GlcNAc...) asparagine glycans are attached at residues asparagine 229 and asparagine 263. The chain crosses the membrane as a helical span at residues 265–283 (TGAVTLLVWLFEVTITVGL). The Cytoplasmic portion of the chain corresponds to 284–346 (RYLHTALEGM…EDAGQAPAAG (63 aa)). The tract at residues 341 to 346 (QAPAAG) is interaction with MREG.

The protein belongs to the PRPH2/ROM1 family. Homodimer; disulfide-linked. Forms a homotetramer. Forms a heterotetramer with ROM1. Homotetramer and heterotetramer core complexes go on to form higher order complexes by formation of intermolecular disulfide bonds. Interacts with MREG. Interacts with STX3. Interacts with SNAP25. Retina (photoreceptor). In rim region of ROS (rod outer segment) disks.

The protein resides in the membrane. The protein localises to the cell projection. It localises to the cilium. It is found in the photoreceptor outer segment. Its subcellular location is the photoreceptor inner segment. Its function is as follows. Essential for retina photoreceptor outer segment disk morphogenesis, may also play a role with ROM1 in the maintenance of outer segment disk structure. Required for the maintenance of retinal outer nuclear layer thickness. Required for the correct development and organization of the photoreceptor inner segment. The sequence is that of Peripherin-2 (PRPH2) from Bos taurus (Bovine).